Here is a 583-residue protein sequence, read N- to C-terminus: Putative amidase C869.01 (583 aa).

An N-terminal signal peptide occupies residues 1–19 (MKLQLLFLTLAQLAKHGLA). Catalysis depends on charge relay system residues Lys141 and Ser222. The active-site Acyl-ester intermediate is Ser246.

This sequence belongs to the amidase family.

It localises to the cytoplasm. The enzyme catalyses a monocarboxylic acid amide + H2O = a monocarboxylate + NH4(+). The polypeptide is Putative amidase C869.01 (Schizosaccharomyces pombe (strain 972 / ATCC 24843) (Fission yeast)).